The chain runs to 538 residues: Cytochrome c-552 (538 aa).

The signal sequence occupies residues 1-55; the sequence is MKIYLRFVWILIIILNFLLNLFITTNGVIIVNAFKKSLIVAASFASLSLFNSATA. H133 lines the heme c pocket. Positions 161, 164, and 165 each coordinate heme. 6 residues coordinate heme c: C199, C202, H203, C264, C267, and H268. The Ca(2+) site is built by E270, Y271, K316, and Q318. Y271 provides a ligand contact to substrate. H319 is a substrate binding site. 9 residues coordinate heme c: H330, C337, C340, H341, H356, C369, C372, H373, and H448.

This sequence belongs to the cytochrome c-552 family. The cofactor is Ca(2+). Requires heme c as cofactor.

The protein localises to the periplasm. It catalyses the reaction 6 Fe(III)-[cytochrome c] + NH4(+) + 2 H2O = 6 Fe(II)-[cytochrome c] + nitrite + 8 H(+). It participates in nitrogen metabolism; nitrate reduction (assimilation). Its function is as follows. Catalyzes the reduction of nitrite to ammonia, consuming six electrons in the process. This is Cytochrome c-552 from Haemophilus influenzae (strain 86-028NP).